The sequence spans 245 residues: Keratin-associated protein 10-12 (245 aa).

19 repeat units span residues 36–40, 41–45, 62–66, 84–88, 94–98, 104–108, 109–113, 114–118, 119–123, 124–128, 131–135, 141–145, 151–155, 156–160, 161–165, 173–177, 183–187, 188–192, and 214–218. The interval 36 to 218 is 19 X 5 AA repeats of C-C-X(3); it reads CCEPPCCAPA…VPVPSCCVPT (183 aa).

This sequence belongs to the KRTAP type 10 family. In terms of assembly, interacts with hair keratins. As to expression, restricted to a narrow region of the hair fiber cuticle, lying approximately 20 cell layers above the apex of the dermal papilla of the hair root; not detected in any other tissues.

Its function is as follows. In the hair cortex, hair keratin intermediate filaments are embedded in an interfilamentous matrix, consisting of hair keratin-associated proteins (KRTAP), which are essential for the formation of a rigid and resistant hair shaft through their extensive disulfide bond cross-linking with abundant cysteine residues of hair keratins. The matrix proteins include the high-sulfur and high-glycine-tyrosine keratins. This is Keratin-associated protein 10-12 (KRTAP10-12) from Homo sapiens (Human).